Here is a 374-residue protein sequence, read N- to C-terminus: Ribosomal RNA large subunit methyltransferase G (374 aa).

It belongs to the methyltransferase superfamily. RlmG family.

It localises to the cytoplasm. The catalysed reaction is guanosine(1835) in 23S rRNA + S-adenosyl-L-methionine = N(2)-methylguanosine(1835) in 23S rRNA + S-adenosyl-L-homocysteine + H(+). In terms of biological role, specifically methylates the guanine in position 1835 (m2G1835) of 23S rRNA. This Pseudomonas putida (strain ATCC 700007 / DSM 6899 / JCM 31910 / BCRC 17059 / LMG 24140 / F1) protein is Ribosomal RNA large subunit methyltransferase G.